The following is a 523-amino-acid chain: MDRELVRTVKLATKNHAGVLFRRAVRHLPHIVAVTALVAAAPRLSTLLAAAAAGGSTMRWARALWSDLAGELGPSAPALAVACWAAALAAYTYAASRPRPVYLIDLAGYKAPREHEASRAKTIAHFGRCGRFSGESMAFQKRMLERSGLGEATHFPTSLISLPVDMCLRTAREESHAVIFGVVDEVLRKSGVAAADVGVLIFNSSLLSPTPSFTSLIVNRYGMRPGVVSHNLSGMGCSAGIIAIDLAKRLLQVHENTYALVVSTENITLNAYMGNNRPMLVTNTLFRVGGAAILLSNRAADRRGRAKYQLIHTVRTHRGAHDQSFGCVTQEEDDAGEVGVSLSKELMVVAGEALKTNITTLGPLVLPISEQLRFLATVVLKRVFRADVKAYLPDFKLALDHFCIHAGGRGVLDELEKSLKLSPWDMEPSRMTLYRFGNTSSSSLWYELAYCEAKGRIKRGDRVWQIAFGSGFKCNSAVWRALRTVDAAGLDAGDNPWMKEVDMLPVDVPKVAPIDETSYQIPN.

A run of 2 helical transmembrane segments spans residues 31–55 (IVAV…AAGG) and 78–96 (ALAV…YAAS). One can recognise an FAE domain in the interval 93 to 382 (YAASRPRPVY…RFLATVVLKR (290 aa)). Active-site residues include Cys237, His317, His401, His405, and Asn438.

This sequence belongs to the thiolase-like superfamily. Chalcone/stilbene synthases family. Highly expressed in leaf sheaths. Expressed in leaves, flag leaves and panicles.

Its subcellular location is the membrane. The enzyme catalyses a very-long-chain acyl-CoA + malonyl-CoA + H(+) = a very-long-chain 3-oxoacyl-CoA + CO2 + CoA. Its function is as follows. Contributes to fatty acids elongation. Plays a role in controlling leaf anatomy and plant architecture. The polypeptide is Probable 3-ketoacyl-CoA synthase 20 (Oryza sativa subsp. japonica (Rice)).